The following is a 434-amino-acid chain: CBL-interacting protein kinase 15 (434 aa).

The 256-residue stretch at 12–267 (YELGRLLGKG…IQKIKESTWF (256 aa)) folds into the Protein kinase domain. Residues 18 to 26 (LGKGTFGKV) and Lys41 contribute to the ATP site. Residue Asp135 is the Proton acceptor of the active site. Residues 153–182 (DFGLSALSESKRQDGLLHTTCGTPAYVAPE) are activation loop. An NAF domain is found at 298 to 333 (RKKNAHEDVKPMSVTNLNAFEIISFSKGFDLSGMFI). The PPI stretch occupies residues 338-367 (RNEARFTSDKSASTIISKLEDVAKALNLRV).

This sequence belongs to the protein kinase superfamily. CAMK Ser/Thr protein kinase family. SNF1 subfamily. The cofactor is Mn(2+).

The enzyme catalyses L-seryl-[protein] + ATP = O-phospho-L-seryl-[protein] + ADP + H(+). The catalysed reaction is L-threonyl-[protein] + ATP = O-phospho-L-threonyl-[protein] + ADP + H(+). Its function is as follows. Involved in salt stress tolerance. CIPK serine-threonine protein kinases interact with CBL proteins. Binding of a CBL protein to the regulatory NAF domain of CIPK protein lead to the activation of the kinase in a calcium-dependent manner. The polypeptide is CBL-interacting protein kinase 15 (CIPK15) (Oryza sativa subsp. japonica (Rice)).